We begin with the raw amino-acid sequence, 366 residues long: Peptide chain release factor 2 (366 aa).

Glutamine 251 carries the N5-methylglutamine modification.

This sequence belongs to the prokaryotic/mitochondrial release factor family. Post-translationally, methylated by PrmC. Methylation increases the termination efficiency of RF2.

The protein resides in the cytoplasm. Peptide chain release factor 2 directs the termination of translation in response to the peptide chain termination codons UGA and UAA. The sequence is that of Peptide chain release factor 2 from Campylobacter concisus (strain 13826).